The sequence spans 508 residues: MLRRALLCLAVAALVRADAPEEEDHVLVLRKSNFAEALAAHKYLLVEFYAPWCGHCKALAPEYAKAAGKLKAEGSEIRLAKVDATEESDLAQQYGVRGYPTIKFFRNGDTASPKEYTAGREADDIVNWLKKRTGPAATTLPDGAAAESLVESSEVAVIGFFKDVESDSAKQFLQAAEAIDDIPFGITSNSDVFSKYQLDKDGVVLFKKFDEGRNNFEGEVTKENLLDFIKHNQLPLVIEFTEQTAPKIFGGEIKTHILLFLPKSVSDYDGKLSNFKTAAESFKGKILFIFIDSDHTDNQRILEFFGLKKEECPAVRLITLEEEMTKYKPESEELTAERITEFCHRFLEGKIKPHLMSQELPEDWDKQPVKVLVGKNFEDVAFDEKKNVFVEFYAPWCGHCKQLAPIWDKLGETYKDHENIVIAKMDSTANEVEAVKVHSFPTLKFFPASADRTVIDYNGERTLDGFKKFLESGGQDGAGDDDDLEDLEEAEEPDMEEDDDQKAVKDEL.

The signal sequence occupies residues 1-17 (MLRRALLCLAVAALVRA). The 117-residue stretch at 18 to 134 (DAPEEEDHVL…IVNWLKKRTG (117 aa)) folds into the Thioredoxin 1 domain. Residues C53 and C56 each act as nucleophile in the active site. An intrachain disulfide couples C53 to C56. Position 200 is an N6-acetyllysine (K200). N6-succinyllysine is present on residues K222 and K271. A Phosphoserine modification is found at S331. The Thioredoxin 2 domain maps to 349-475 (GKIKPHLMSQ…FKKFLESGGQ (127 aa)). A Phosphoserine; by FAM20C modification is found at S357. Catalysis depends on nucleophile residues C397 and C400. C397 and C400 are oxidised to a cystine. S427 bears the Phosphoserine mark. Residues 471-508 (ESGGQDGAGDDDDLEDLEEAEEPDMEEDDDQKAVKDEL) are disordered. Residues 478 to 500 (AGDDDDLEDLEEAEEPDMEEDDD) show a composition bias toward acidic residues. Positions 505 to 508 (KDEL) match the Prevents secretion from ER motif.

It belongs to the protein disulfide isomerase family. In terms of assembly, heterodimer; heterodimerizes with the protein microsomal triglyceride transfer MTTP. Homodimer. Monomers and homotetramers may also occur. Interacts with P4HA2, forming a heterotetramer consisting of 2 alpha subunits (P4HA2) and 2 beta (P4HB), where P4HB plays the role of a structural subunit; this tetramer catalyzes the formation of 4-hydroxyproline in collagen. Also constitutes the structural subunit of the microsomal triacylglycerol transfer protein MTTP in mammalian cells. Stabilizes both enzymes and retain them in the ER without contributing to the catalytic activity. Binds UBQLN1. Interacts with ERO1B. Binds to CD4, and upon HIV-1 binding to the cell membrane, is part of a P4HB/PDI-CD4-CXCR4-gp120 complex. Interacts with ILDR2. Interacts with ERN1/IRE1A (via N-terminus); the interaction is enhanced by phosphorylation of P4HB by FAM20C in response to endoplasmic reticulum stress and results in attenuation of ERN1 activity. In terms of processing, phosphorylation of Ser-357 by FAM20C is induced by endoplasmic reticulum stress and results in a functional switch from oxidoreductase to molecular chaperone. It also promotes interaction with ERN1.

The protein localises to the endoplasmic reticulum. It localises to the endoplasmic reticulum lumen. Its subcellular location is the melanosome. The protein resides in the cell membrane. It carries out the reaction Catalyzes the rearrangement of -S-S- bonds in proteins.. Functionally, this multifunctional protein catalyzes the formation, breakage and rearrangement of disulfide bonds. At the cell surface, seems to act as a reductase that cleaves disulfide bonds of proteins attached to the cell. May therefore cause structural modifications of exofacial proteins. Inside the cell, seems to form/rearrange disulfide bonds of nascent proteins. At high concentrations and following phosphorylation by FAM20C, functions as a chaperone that inhibits aggregation of misfolded proteins. At low concentrations, facilitates aggregation (anti-chaperone activity). May be involved with other chaperones in the structural modification of the TG precursor in hormone biogenesis. Also acts as a structural subunit of various enzymes such as prolyl 4-hydroxylase and microsomal triacylglycerol transfer protein MTTP. Receptor for LGALS9; the interaction retains P4HB at the cell surface of Th2 T helper cells, increasing disulfide reductase activity at the plasma membrane, altering the plasma membrane redox state and enhancing cell migration. This chain is Protein disulfide-isomerase (P4HB), found in Homo sapiens (Human).